The chain runs to 449 residues: Phosphoglucosamine mutase (449 aa).

S101 (phosphoserine intermediate) is an active-site residue. S101, D240, D242, and D244 together coordinate Mg(2+). S101 is subject to Phosphoserine.

It belongs to the phosphohexose mutase family. The cofactor is Mg(2+). Post-translationally, activated by phosphorylation.

It carries out the reaction alpha-D-glucosamine 1-phosphate = D-glucosamine 6-phosphate. In terms of biological role, catalyzes the conversion of glucosamine-6-phosphate to glucosamine-1-phosphate. The chain is Phosphoglucosamine mutase from Streptococcus mutans serotype c (strain ATCC 700610 / UA159).